The sequence spans 447 residues: Tubulin beta chain (447 aa).

Residues Gln-11, Glu-69, Ser-138, Gly-142, Thr-143, Gly-144, Asn-204, and Asn-226 each coordinate GTP. Glu-69 contacts Mg(2+). A disordered region spans residues 424 to 447 (QYQDASISEGEEDYEEEPQVENEE). Residues 432–447 (EGEEDYEEEPQVENEE) are compositionally biased toward acidic residues.

The protein belongs to the tubulin family. In terms of assembly, dimer of alpha and beta chains. A typical microtubule is a hollow water-filled tube with an outer diameter of 25 nm and an inner diameter of 15 nM. Alpha-beta heterodimers associate head-to-tail to form protofilaments running lengthwise along the microtubule wall with the beta-tubulin subunit facing the microtubule plus end conferring a structural polarity. Microtubules usually have 13 protofilaments but different protofilament numbers can be found in some organisms and specialized cells. Mg(2+) serves as cofactor.

Its subcellular location is the cytoplasm. It is found in the cytoskeleton. Its function is as follows. Tubulin is the major constituent of microtubules, a cylinder consisting of laterally associated linear protofilaments composed of alpha- and beta-tubulin heterodimers. Microtubules grow by the addition of GTP-tubulin dimers to the microtubule end, where a stabilizing cap forms. Below the cap, tubulin dimers are in GDP-bound state, owing to GTPase activity of alpha-tubulin. The chain is Tubulin beta chain from Uncinula necator (Grape powdery mildew).